The primary structure comprises 588 residues: MASKKREVQLQTVINNQSLWDEMLQNKGLTVIDVYQAWCGPCRAMQPLFRKLKNELNEDEILHFAVAEADNIVTLQPFRDKCEPVFLFSVNGKIIEKIQGANAPLVNKKVINLIDEERKIAAGEMARPQYPEIPLVDSDSEVSEESPCESVQELYSIAIIKPDAVISKKVLEIKRKITKAGFIIEAEHKTVLTEEQVVNFYSRIADQCDFEEFVSFMTSGLSYILVVSQGSKHNPPSEETEPQTDTEPNERSEDQPEVEAQVTPGMMKNKQDSLQEYLERQHLAQLCDIEEDAANVAKFMDAFFPDFKKMKSMKLEKTLALLRPNLFHERKDDVLRIIKDEDFKILEQRQVVLSEKEAQALCKEYENEDYFNKLIENMTSGPSLALVLLRDNGLQYWKQLLGPRTVEEAIEYFPESLCAQFAMDSLPVNQLYGSDSLETAEREIQHFFPLQSTLGLIKPHATSEQREQILKIVKEAGFDLTQVKKMFLTPEQIEKIYPKVTGKDFYKDLLEMLSVGPSMVMILTKWNAVAEWRRLMGPTDPEEAKLLSPDSIRAQFGISKLKNIVHGASNAYEAKEVVNRLFEDPEEN.

The 118-residue stretch at 2-119 folds into the Thioredoxin domain; sequence ASKKREVQLQ…VINLIDEERK (118 aa). A disulfide bridge connects residues Cys39 and Cys42. 3 NDK regions span residues 157 to 257, 315 to 455, and 456 to 588; these read IAII…DQPE, LEKT…STLG, and LIKP…PEEN. The tract at residues 230-261 is disordered; it reads GSKHNPPSEETEPQTDTEPNERSEDQPEVEAQ.

This sequence in the C-terminal section; belongs to the NDK family. In terms of assembly, monomer. In terms of tissue distribution, testis-specific. Expressed only in primary spermatocytes and round spermatids.

The protein resides in the cytoplasm. Functionally, probably required during the final stages of sperm tail maturation in the testis and/or epididymis, where extensive disulfide bonding of fibrous sheath (FS) proteins occurs. In vitro, it has neither nucleoside diphosphate kinase (NDPK) activity nor reducing activity on disulfide bonds. Exhibits a 3'-5' exonuclease activity with a preference for single-stranded DNA, suggesting roles in DNA proofreading and repair. The polypeptide is Thioredoxin domain-containing protein 3 (Homo sapiens (Human)).